Here is a 188-residue protein sequence, read N- to C-terminus: Elongation factor P (188 aa).

Position 34 is an N6-(3,6-diaminohexanoyl)-5-hydroxylysine (K34).

It belongs to the elongation factor P family. Post-translationally, may be beta-lysylated on the epsilon-amino group of Lys-34 by the combined action of EpmA and EpmB, and then hydroxylated on the C5 position of the same residue by EpmC (if this protein is present). Lysylation is critical for the stimulatory effect of EF-P on peptide-bond formation. The lysylation moiety may extend toward the peptidyltransferase center and stabilize the terminal 3-CCA end of the tRNA. Hydroxylation of the C5 position on Lys-34 may allow additional potential stabilizing hydrogen-bond interactions with the P-tRNA.

Its subcellular location is the cytoplasm. The protein operates within protein biosynthesis; polypeptide chain elongation. In terms of biological role, involved in peptide bond synthesis. Alleviates ribosome stalling that occurs when 3 or more consecutive Pro residues or the sequence PPG is present in a protein, possibly by augmenting the peptidyl transferase activity of the ribosome. Modification of Lys-34 is required for alleviation. This Haemophilus influenzae (strain PittGG) protein is Elongation factor P.